Reading from the N-terminus, the 268-residue chain is 4-hydroxy-tetrahydrodipicolinate reductase (268 aa).

NAD(+) is bound by residues 8–13 (GAAGRM) and E34. R35 is an NADP(+) binding site. NAD(+)-binding positions include 96 to 98 (GST) and 120 to 123 (SPNM). H153 functions as the Proton donor/acceptor in the catalytic mechanism. Residue H154 participates in (S)-2,3,4,5-tetrahydrodipicolinate binding. Residue K157 is the Proton donor of the active site. 163 to 164 (GT) is a (S)-2,3,4,5-tetrahydrodipicolinate binding site.

The protein belongs to the DapB family.

The protein localises to the cytoplasm. It carries out the reaction (S)-2,3,4,5-tetrahydrodipicolinate + NAD(+) + H2O = (2S,4S)-4-hydroxy-2,3,4,5-tetrahydrodipicolinate + NADH + H(+). The catalysed reaction is (S)-2,3,4,5-tetrahydrodipicolinate + NADP(+) + H2O = (2S,4S)-4-hydroxy-2,3,4,5-tetrahydrodipicolinate + NADPH + H(+). It participates in amino-acid biosynthesis; L-lysine biosynthesis via DAP pathway; (S)-tetrahydrodipicolinate from L-aspartate: step 4/4. Its function is as follows. Catalyzes the conversion of 4-hydroxy-tetrahydrodipicolinate (HTPA) to tetrahydrodipicolinate. This chain is 4-hydroxy-tetrahydrodipicolinate reductase, found in Anaeromyxobacter sp. (strain Fw109-5).